Reading from the N-terminus, the 858-residue chain is Leucine--tRNA ligase (858 aa).

Positions 42 to 52 (PYPSGRLHMGH) match the 'HIGH' region motif. Residues 618-622 (KMSKS) carry the 'KMSKS' region motif. Lys621 is a binding site for ATP.

This sequence belongs to the class-I aminoacyl-tRNA synthetase family.

It localises to the cytoplasm. The catalysed reaction is tRNA(Leu) + L-leucine + ATP = L-leucyl-tRNA(Leu) + AMP + diphosphate. The protein is Leucine--tRNA ligase of Aeromonas salmonicida (strain A449).